The sequence spans 498 residues: MFESAEIGHAIDDDTYEAALPSLREALLEAQIDLHEQAKRQIIVLINGIEGAGKGETVKLLSEWMDPRLIEVRTFDQQTDEELAHPPVWRYWRQLPAKGRMGIFFGNWYSQMLQGRVHGQYKDAVLDQAISGAERLEKMLCDEGALIFKFWFHLSKKQMKLRLKTLKDDPLHSWRISPLDWQQSKTYDKFVRFGERVLRRTSRDYAPWHVIEGVDANYRSLTVGRLLLEGMQAALNKVEPESSALTIGPLAIHNNERTLLDSLDLSLHLSKEDYQHELIAEQARLSGNLRDKRMKSHALVAVFEGNDAAGKGGAIRRVAAALDPRQYAIVPIAAPTQDERAQPYLWRFWRQIPARGKFTIFDRSWYGRVLVERVEGFCSESDWKRAYAEINDFEEQLTEAGVVVVKFWLAIDEQTQLERFQEREKIPFKRYKITEDDWRNRKKWPDYRQAVGDMVDRTSTEIAPWTLIEANDKRWARVKVLRTINEALEKAFARDKKK.

PPK2 stretches follow at residues 11–234 (IDDD…MQAA) and 269–491 (LSKE…LEKA).

The protein belongs to the polyphosphate kinase 2 (PPK2) family. Class II subfamily.

It catalyses the reaction [phosphate](n) + ADP = [phosphate](n+1) + AMP. Functionally, uses inorganic polyphosphate (polyP) as a donor to convert AMP to ADP. Can also convert GMP to GDP, with lower efficiency. The chain is Polyphosphate:AMP phosphotransferase from Pseudomonas syringae pv. tomato (strain ATCC BAA-871 / DC3000).